Reading from the N-terminus, the 78-residue chain is D-alanyl carrier protein (78 aa).

Positions 1–78 (MDVENTVVEI…KIIAKAKELQ (78 aa)) constitute a Carrier domain. Ser36 is modified (O-(pantetheine 4'-phosphoryl)serine).

This sequence belongs to the DltC family. In terms of processing, 4'-phosphopantetheine is transferred from CoA to a specific serine of apo-DCP.

The protein resides in the cytoplasm. It participates in cell wall biogenesis; lipoteichoic acid biosynthesis. Its function is as follows. Carrier protein involved in the D-alanylation of lipoteichoic acid (LTA). The loading of thioester-linked D-alanine onto DltC is catalyzed by D-alanine--D-alanyl carrier protein ligase DltA. The DltC-carried D-alanyl group is further transferred to cell membrane phosphatidylglycerol (PG) by forming an ester bond, probably catalyzed by DltD. D-alanylation of LTA plays an important role in modulating the properties of the cell wall in Gram-positive bacteria, influencing the net charge of the cell wall. This is D-alanyl carrier protein from Latilactobacillus sakei subsp. sakei (strain 23K) (Lactobacillus sakei subsp. sakei).